The primary structure comprises 243 residues: Carboxy-S-adenosyl-L-methionine synthase (243 aa).

S-adenosyl-L-methionine is bound by residues Y40, 65 to 67, 90 to 91, 118 to 119, N133, and R200; these read GCS, DN, and DI.

It belongs to the class I-like SAM-binding methyltransferase superfamily. Cx-SAM synthase family. Homodimer.

The catalysed reaction is prephenate + S-adenosyl-L-methionine = carboxy-S-adenosyl-L-methionine + 3-phenylpyruvate + H2O. Functionally, catalyzes the conversion of S-adenosyl-L-methionine (SAM) to carboxy-S-adenosyl-L-methionine (Cx-SAM). This Shewanella pealeana (strain ATCC 700345 / ANG-SQ1) protein is Carboxy-S-adenosyl-L-methionine synthase.